The primary structure comprises 4466 residues: Dynein beta chain, ciliary (4466 aa).

Positions 1 to 1813 are stem; it reads MGDVVDARLD…YANICDAQFK (1813 aa). 154–161 is an ATP binding site; that stretch reads AGQVKGKT. Coiled coils occupy residues 482-502, 627-643, 734-805, 1036-1056, 1306-1337, and 1443-1468; these read QEFL…DRRL, QKYE…EQKV, VLEV…WTKQ, TLDQ…EADE, WLEI…AWDA, and LLKS…MTSK. AAA regions lie at residues 1814-2035, 2095-2316, 2422-2669, and 2767-3016; these read YSYE…VLVV, KVVK…IRFK, ELDP…VFQG, and TYNE…ERRY. ATP contacts are provided by residues 1852–1859, 2133–2140, 2460–2467, and 2805–2812; these read GPAGTGKT, GNAGTGKS, GNAGLGKS, and GVGGSGKQ. Coiled-coil stretches lie at residues 3033-3134, 3263-3325, and 3573-3642; these read SLLA…AKAE, EPKR…SRTI, and QERP…EEAK. The stalk stretch occupies residues 3033–3325; sequence SLLAMKSKEL…QEAEATSRTI (293 aa). AAA regions lie at residues 3409–3636 and 3846–4072; these read LTDD…EISV and VRNF…VLYN.

This sequence belongs to the dynein heavy chain family. In terms of assembly, consists of at least two heavy chains (alpha and beta), three intermediate chains and several light chains.

The protein localises to the cell projection. It is found in the cilium. Its subcellular location is the flagellum. It localises to the cytoplasm. The protein resides in the cytoskeleton. The protein localises to the flagellum axoneme. Force generating protein of eukaryotic cilia and flagella. Produces force towards the minus ends of microtubules. Dynein has ATPase activity; the force-producing power stroke is thought to occur on release of ADP. This chain is Dynein beta chain, ciliary, found in Heliocidaris crassispina (Sea urchin).